Consider the following 261-residue polypeptide: Small ribosomal subunit protein eS1z (261 aa).

The segment covering 1-18 (MAVGKNKRISKGKKGGKK) has biased composition (basic residues). The segment at 1 to 20 (MAVGKNKRISKGKKGGKKKA) is disordered.

The protein belongs to the eukaryotic ribosomal protein eS1 family. In terms of assembly, component of the small ribosomal subunit. Mature ribosomes consist of a small (40S) and a large (60S) subunit. The 40S subunit contains about 33 different proteins and 1 molecule of RNA (18S). The 60S subunit contains about 49 different proteins and 3 molecules of RNA (25S, 5.8S and 5S).

The protein localises to the cytoplasm. The chain is Small ribosomal subunit protein eS1z from Vitis vinifera (Grape).